A 334-amino-acid polypeptide reads, in one-letter code: MIEADRLVSAGVISEEEVIDRAIRPKMLAEYVGQPVVREQMEIFIKAAMMRGDALDHLLIFGPPGLGKTTLANIVANEMGVNLRTTSGPVLEKAGDLAALLTNLEPHDVLFIDEIHRLSPVVEEVLYPAMEDYQLDIMIGEGPAARSIKLDLPPFTLIGATTRAGSLTSPLRDRFGIVQRLEFYRVEDLQHIVGRSAACLGLPLSDEGALEIARRARGTPRIANRLLRRVRDFAEVRAGGEMSGDVASRALDMLSVDSEGFDYMDRKLLLAIIDKFTGGPVGLDNLAAAIGEERETIEDVLEPYLIQQGFIQRTPRGRMATQHAYKHFGITREG.

Positions 4–184 are large ATPase domain (RuvB-L); the sequence is ADRLVSAGVI…FGIVQRLEFY (181 aa). ATP-binding positions include Ile23, Arg24, Gly65, Lys68, Thr69, Thr70, 131-133, Arg174, Tyr184, and Arg221; that span reads EDY. Thr69 serves as a coordination point for Mg(2+). A small ATPAse domain (RuvB-S) region spans residues 185–255; that stretch reads RVEDLQHIVG…VASRALDMLS (71 aa). Residues 258–334 are head domain (RuvB-H); that stretch reads SEGFDYMDRK…YKHFGITREG (77 aa). The DNA site is built by Arg294, Arg313, and Arg318.

It belongs to the RuvB family. Homohexamer. Forms an RuvA(8)-RuvB(12)-Holliday junction (HJ) complex. HJ DNA is sandwiched between 2 RuvA tetramers; dsDNA enters through RuvA and exits via RuvB. An RuvB hexamer assembles on each DNA strand where it exits the tetramer. Each RuvB hexamer is contacted by two RuvA subunits (via domain III) on 2 adjacent RuvB subunits; this complex drives branch migration. In the full resolvosome a probable DNA-RuvA(4)-RuvB(12)-RuvC(2) complex forms which resolves the HJ.

The protein localises to the cytoplasm. It catalyses the reaction ATP + H2O = ADP + phosphate + H(+). The RuvA-RuvB-RuvC complex processes Holliday junction (HJ) DNA during genetic recombination and DNA repair, while the RuvA-RuvB complex plays an important role in the rescue of blocked DNA replication forks via replication fork reversal (RFR). RuvA specifically binds to HJ cruciform DNA, conferring on it an open structure. The RuvB hexamer acts as an ATP-dependent pump, pulling dsDNA into and through the RuvAB complex. RuvB forms 2 homohexamers on either side of HJ DNA bound by 1 or 2 RuvA tetramers; 4 subunits per hexamer contact DNA at a time. Coordinated motions by a converter formed by DNA-disengaged RuvB subunits stimulates ATP hydrolysis and nucleotide exchange. Immobilization of the converter enables RuvB to convert the ATP-contained energy into a lever motion, pulling 2 nucleotides of DNA out of the RuvA tetramer per ATP hydrolyzed, thus driving DNA branch migration. The RuvB motors rotate together with the DNA substrate, which together with the progressing nucleotide cycle form the mechanistic basis for DNA recombination by continuous HJ branch migration. Branch migration allows RuvC to scan DNA until it finds its consensus sequence, where it cleaves and resolves cruciform DNA. The sequence is that of Holliday junction branch migration complex subunit RuvB from Erwinia tasmaniensis (strain DSM 17950 / CFBP 7177 / CIP 109463 / NCPPB 4357 / Et1/99).